A 201-amino-acid chain; its full sequence is Imidazoleglycerol-phosphate dehydratase (201 aa).

The protein belongs to the imidazoleglycerol-phosphate dehydratase family.

Its subcellular location is the cytoplasm. It catalyses the reaction D-erythro-1-(imidazol-4-yl)glycerol 3-phosphate = 3-(imidazol-4-yl)-2-oxopropyl phosphate + H2O. It participates in amino-acid biosynthesis; L-histidine biosynthesis; L-histidine from 5-phospho-alpha-D-ribose 1-diphosphate: step 6/9. The protein is Imidazoleglycerol-phosphate dehydratase of Prochlorococcus marinus (strain MIT 9515).